The sequence spans 88 residues: MSESRNQRKVYQGRVVSDKMDKTITVVVETYKNHKVYGKRVKYSKKFKAHDENNEAKVGDIVKIMETRPLSATKRFRLLEIVEKAVIL.

This sequence belongs to the universal ribosomal protein uS17 family. Part of the 30S ribosomal subunit.

In terms of biological role, one of the primary rRNA binding proteins, it binds specifically to the 5'-end of 16S ribosomal RNA. The chain is Small ribosomal subunit protein uS17 from Ligilactobacillus salivarius (strain UCC118) (Lactobacillus salivarius).